A 253-amino-acid chain; its full sequence is Hydroxyacylglutathione hydrolase (253 aa).

The Zn(2+) site is built by His59, His61, Asp63, His64, His118, Asp143, and His181.

The protein belongs to the metallo-beta-lactamase superfamily. Glyoxalase II family. As to quaternary structure, monomer. The cofactor is Zn(2+).

It carries out the reaction an S-(2-hydroxyacyl)glutathione + H2O = a 2-hydroxy carboxylate + glutathione + H(+). The protein operates within secondary metabolite metabolism; methylglyoxal degradation; (R)-lactate from methylglyoxal: step 2/2. In terms of biological role, thiolesterase that catalyzes the hydrolysis of S-D-lactoyl-glutathione to form glutathione and D-lactic acid. The protein is Hydroxyacylglutathione hydrolase of Prochlorococcus marinus (strain MIT 9211).